A 676-amino-acid chain; its full sequence is RNA helicase NPH-II (676 aa).

The Helicase ATP-binding domain occupies 172–347; the sequence is FLAWISHRPV…IFLPNPAFIH (176 aa). Residue 185–192 coordinates ATP; sequence GGTGVGKT. A DEXH box motif is present at residues 296 to 299; sequence DEVH. In terms of domain architecture, Helicase C-terminal spans 366-535; the sequence is NPSSRMAYIE…NYILYANKFN (170 aa).

It belongs to the DEAD box helicase family. DEAH subfamily. Monomer.

It is found in the virion. It catalyses the reaction ATP + H2O = ADP + phosphate + H(+). In terms of biological role, NTP-dependent helicase that catalyzes unidirectional unwinding of 3'tailed duplex RNAs and plays an important role during transcription of early mRNAs, presumably by preventing R-loop formation behind the elongating RNA polymerase. Might also play a role in the export of newly synthesized mRNA chains out of the core into the cytoplasm. Required for replication and propagation of viral particles. In Monkeypox virus, this protein is RNA helicase NPH-II (OPG084).